Consider the following 548-residue polypeptide: Aspergilol synthase AuAP450 (548 aa).

Residues 38–58 traverse the membrane as a helical segment; sequence PQLVITTLGALLLAAFYLLPS. A heme-binding site is contributed by C489.

This sequence belongs to the cytochrome P450 family. The cofactor is heme.

The protein resides in the membrane. The protein operates within secondary metabolite biosynthesis; terpenoid biosynthesis. Its function is as follows. Cytochrome P450 monooxygenase; part of the gene cluster that mediates the biosynthesis of aspergiltriene A, aspergildienes A-D and aspergilols A-D. The bifunctional terpene synthase AuAS converts DMAPP and IPP into sesterterpenes. The C-terminal prenyltransferase (PT) domain of AuAS catalyzes formation of GFPP, whereas the N-terminal terpene cyclase (TC) domain catalyzes the cyclization of GFPP into 5 distinct sesterterpenes: aspergiltriene A, aspergildiene A, aspergildiene B, aspergildiene C and aspergildiene D. The cytochrome P450 monooxygenase AP450 then hydroxylates the aspergildienes A, B, C and D to yield the corresponding sesterterpene alcohols, aspergilols A-D. The polypeptide is Aspergilol synthase AuAP450 (Aspergillus ustus).